The primary structure comprises 287 residues: Small ribosomal subunit biogenesis GTPase RsgA (287 aa).

Residues 61–218 (SSELIRPTVA…LVDTPGFTTL (158 aa)) enclose the CP-type G domain. GTP contacts are provided by residues 110–113 (NKED) and 161–169 (GPSGAGKST). Zn(2+) is bound by residues Cys-242, Cys-247, His-249, and Cys-255.

Belongs to the TRAFAC class YlqF/YawG GTPase family. RsgA subfamily. Monomer. Associates with 30S ribosomal subunit, binds 16S rRNA. Zn(2+) is required as a cofactor.

It is found in the cytoplasm. In terms of biological role, one of several proteins that assist in the late maturation steps of the functional core of the 30S ribosomal subunit. Helps release RbfA from mature subunits. May play a role in the assembly of ribosomal proteins into the subunit. Circularly permuted GTPase that catalyzes slow GTP hydrolysis, GTPase activity is stimulated by the 30S ribosomal subunit. In Clostridium perfringens (strain SM101 / Type A), this protein is Small ribosomal subunit biogenesis GTPase RsgA.